The following is a 541-amino-acid chain: Chaperonin GroEL (541 aa).

ATP contacts are provided by residues threonine 29–proline 32, lysine 50, aspartate 86–threonine 90, glycine 416, and aspartate 498.

It belongs to the chaperonin (HSP60) family. Forms a cylinder of 14 subunits composed of two heptameric rings stacked back-to-back. Interacts with the co-chaperonin GroES.

It localises to the cytoplasm. The catalysed reaction is ATP + H2O + a folded polypeptide = ADP + phosphate + an unfolded polypeptide.. Its function is as follows. Together with its co-chaperonin GroES, plays an essential role in assisting protein folding. The GroEL-GroES system forms a nano-cage that allows encapsulation of the non-native substrate proteins and provides a physical environment optimized to promote and accelerate protein folding. This chain is Chaperonin GroEL, found in Anaplasma phagocytophilum (Ehrlichia phagocytophila).